The following is a 447-amino-acid chain: Glutamyl-tRNA(Gln) amidotransferase subunit A (447 aa).

Catalysis depends on charge relay system residues lysine 50 and serine 125. The active-site Acyl-ester intermediate is the serine 149.

It belongs to the amidase family. GatA subfamily. Heterotrimer of A, B and C subunits.

The catalysed reaction is L-glutamyl-tRNA(Gln) + L-glutamine + ATP + H2O = L-glutaminyl-tRNA(Gln) + L-glutamate + ADP + phosphate + H(+). Functionally, allows the formation of correctly charged Gln-tRNA(Gln) through the transamidation of misacylated Glu-tRNA(Gln) in organisms which lack glutaminyl-tRNA synthetase. The reaction takes place in the presence of glutamine and ATP through an activated gamma-phospho-Glu-tRNA(Gln). In Sulfurimonas denitrificans (strain ATCC 33889 / DSM 1251) (Thiomicrospira denitrificans (strain ATCC 33889 / DSM 1251)), this protein is Glutamyl-tRNA(Gln) amidotransferase subunit A.